Consider the following 901-residue polypeptide: HTH-type transcriptional regulator MalT (901 aa).

39–46 is an ATP binding site; sequence SPAGYGKT. An HTH luxR-type domain is found at 829-894; the sequence is ELIRTSPLTQ…DAVQHAQQLL (66 aa). A DNA-binding region (H-T-H motif) is located at residues 853-872; it reads NEQIAGELAVAATTIKTHIR.

Belongs to the MalT family. Monomer in solution. Oligomerizes to an active state in the presence of the positive effectors ATP and maltotriose.

With respect to regulation, activated by ATP and maltotriose, which are both required for DNA binding. Functionally, positively regulates the transcription of the maltose regulon whose gene products are responsible for uptake and catabolism of malto-oligosaccharides. Specifically binds to the promoter region of its target genes, recognizing a short DNA motif called the MalT box. In Salmonella typhimurium (strain LT2 / SGSC1412 / ATCC 700720), this protein is HTH-type transcriptional regulator MalT.